Reading from the N-terminus, the 503-residue chain is Probable cytosol aminopeptidase (503 aa).

Mn(2+) is bound by residues lysine 270 and aspartate 275. The active site involves lysine 282. Residues aspartate 293, aspartate 352, and glutamate 354 each coordinate Mn(2+). Arginine 356 is an active-site residue.

This sequence belongs to the peptidase M17 family. Mn(2+) is required as a cofactor.

It localises to the cytoplasm. It carries out the reaction Release of an N-terminal amino acid, Xaa-|-Yaa-, in which Xaa is preferably Leu, but may be other amino acids including Pro although not Arg or Lys, and Yaa may be Pro. Amino acid amides and methyl esters are also readily hydrolyzed, but rates on arylamides are exceedingly low.. It catalyses the reaction Release of an N-terminal amino acid, preferentially leucine, but not glutamic or aspartic acids.. In terms of biological role, presumably involved in the processing and regular turnover of intracellular proteins. Catalyzes the removal of unsubstituted N-terminal amino acids from various peptides. The protein is Probable cytosol aminopeptidase of Salmonella typhi.